We begin with the raw amino-acid sequence, 177 residues long: Adenine phosphoribosyltransferase (177 aa).

The protein belongs to the purine/pyrimidine phosphoribosyltransferase family. As to quaternary structure, homodimer.

Its subcellular location is the cytoplasm. The catalysed reaction is AMP + diphosphate = 5-phospho-alpha-D-ribose 1-diphosphate + adenine. Its pathway is purine metabolism; AMP biosynthesis via salvage pathway; AMP from adenine: step 1/1. In terms of biological role, catalyzes a salvage reaction resulting in the formation of AMP, that is energically less costly than de novo synthesis. The sequence is that of Adenine phosphoribosyltransferase from Chlorobium phaeovibrioides (strain DSM 265 / 1930) (Prosthecochloris vibrioformis (strain DSM 265)).